A 525-amino-acid polypeptide reads, in one-letter code: RNA-directed RNA polymerase (525 aa).

One can recognise a RdRp catalytic domain in the interval 72-272 (LVYADNIYIV…DKERLFCSAA (201 aa)).

Interacts with VP3 in the cytoplasm. In terms of processing, may exist in multiple phosphorylated forms.

Its subcellular location is the virion. The catalysed reaction is RNA(n) + a ribonucleoside 5'-triphosphate = RNA(n+1) + diphosphate. Its function is as follows. RNA-dependent RNA polymerase which is found both free and covalently attached to the genomic RNA. May also contain guanylyl and methyl transferase activities. The chain is RNA-directed RNA polymerase (VP1) from Gallus gallus (Chicken).